A 194-amino-acid chain; its full sequence is Putative NAD(P)H nitroreductase YfhC (194 aa).

FMN is bound by residues 20–22 (RRS), 147–148 (KI), and arginine 188.

Belongs to the nitroreductase family. Requires FMN as cofactor.

This Bacillus subtilis (strain 168) protein is Putative NAD(P)H nitroreductase YfhC (yfhC).